Consider the following 205-residue polypeptide: Molybdenum cofactor guanylyltransferase (205 aa).

GTP-binding positions include 14–16 (LAG), Lys-27, Asp-77, and Asp-107. Asp-107 serves as a coordination point for Mg(2+).

The protein belongs to the MobA family. As to quaternary structure, monomer. Mg(2+) serves as cofactor.

It localises to the cytoplasm. It catalyses the reaction Mo-molybdopterin + GTP + H(+) = Mo-molybdopterin guanine dinucleotide + diphosphate. Transfers a GMP moiety from GTP to Mo-molybdopterin (Mo-MPT) cofactor (Moco or molybdenum cofactor) to form Mo-molybdopterin guanine dinucleotide (Mo-MGD) cofactor. The protein is Molybdenum cofactor guanylyltransferase of Burkholderia cenocepacia (strain HI2424).